The following is a 142-amino-acid chain: MAKKVQAYVKLQVAAGMANPSPPVGPALGQQGVNIMEFCKAFNARTESLEKGLPIPVVITVYADRSFTFVTKTPPAAVLLKKAAGVKSGSGKPNKEKVGKVTLDQVRQIAETKAADMTGATIETKMKSIAGTARSMGLVVEE.

It belongs to the universal ribosomal protein uL11 family. In terms of assembly, part of the ribosomal stalk of the 50S ribosomal subunit. Interacts with L10 and the large rRNA to form the base of the stalk. L10 forms an elongated spine to which L12 dimers bind in a sequential fashion forming a multimeric L10(L12)X complex. In terms of processing, one or more lysine residues are methylated.

In terms of biological role, forms part of the ribosomal stalk which helps the ribosome interact with GTP-bound translation factors. This chain is Large ribosomal subunit protein uL11, found in Mannheimia succiniciproducens (strain KCTC 0769BP / MBEL55E).